The primary structure comprises 1073 residues: Carbamoyl phosphate synthase large chain (1073 aa).

The segment at 1–399 (MPKREDIKKV…SLLKAFKSLD (399 aa)) is carboxyphosphate synthetic domain. Residues Arg129, Arg169, Gly175, Gly176, Glu208, Val210, Glu215, Gly241, Val242, His243, Gln284, and Glu296 each contribute to the ATP site. An ATP-grasp 1 domain is found at 133 to 325 (KETMLSIGEK…IARVTAKIAI (193 aa)). Mg(2+)-binding residues include Gln284, Glu296, and Asn298. Residues Gln284, Glu296, and Asn298 each coordinate Mn(2+). The interval 400-540 (IDNQLGIKRW…YSTYEDTCET (141 aa)) is oligomerization domain. The tract at residues 541-931 (NSTDKKKILI…YKAELAADNL (391 aa)) is carbamoyl phosphate synthetic domain. The 192-residue stretch at 672–863 (YLLMQELGIP…LAKIAAKVIA (192 aa)) folds into the ATP-grasp 2 domain. Positions 708, 747, 749, 754, 779, 780, 781, 782, 822, and 834 each coordinate ATP. 3 residues coordinate Mg(2+): Gln822, Glu834, and Asn836. Mn(2+)-binding residues include Gln822, Glu834, and Asn836. Positions 930 to 1071 (NLLPLTGKVF…NEYHKEMEQK (142 aa)) constitute an MGS-like domain. Residues 932 to 1073 (LPLTGKVFLS…YHKEMEQKEE (142 aa)) form an allosteric domain region.

Belongs to the CarB family. Composed of two chains; the small (or glutamine) chain promotes the hydrolysis of glutamine to ammonia, which is used by the large (or ammonia) chain to synthesize carbamoyl phosphate. Tetramer of heterodimers (alpha,beta)4. It depends on Mg(2+) as a cofactor. Requires Mn(2+) as cofactor.

It carries out the reaction hydrogencarbonate + L-glutamine + 2 ATP + H2O = carbamoyl phosphate + L-glutamate + 2 ADP + phosphate + 2 H(+). The catalysed reaction is hydrogencarbonate + NH4(+) + 2 ATP = carbamoyl phosphate + 2 ADP + phosphate + 2 H(+). It functions in the pathway amino-acid biosynthesis; L-arginine biosynthesis; carbamoyl phosphate from bicarbonate: step 1/1. Its pathway is pyrimidine metabolism; UMP biosynthesis via de novo pathway; (S)-dihydroorotate from bicarbonate: step 1/3. Functionally, large subunit of the glutamine-dependent carbamoyl phosphate synthetase (CPSase). CPSase catalyzes the formation of carbamoyl phosphate from the ammonia moiety of glutamine, carbonate, and phosphate donated by ATP, constituting the first step of 2 biosynthetic pathways, one leading to arginine and/or urea and the other to pyrimidine nucleotides. The large subunit (synthetase) binds the substrates ammonia (free or transferred from glutamine from the small subunit), hydrogencarbonate and ATP and carries out an ATP-coupled ligase reaction, activating hydrogencarbonate by forming carboxy phosphate which reacts with ammonia to form carbamoyl phosphate. This chain is Carbamoyl phosphate synthase large chain, found in Methanosarcina mazei (strain ATCC BAA-159 / DSM 3647 / Goe1 / Go1 / JCM 11833 / OCM 88) (Methanosarcina frisia).